We begin with the raw amino-acid sequence, 124 residues long: Phosphoribosyl-ATP pyrophosphatase (124 aa).

The protein belongs to the PRA-PH family.

The protein resides in the cytoplasm. It catalyses the reaction 1-(5-phospho-beta-D-ribosyl)-ATP + H2O = 1-(5-phospho-beta-D-ribosyl)-5'-AMP + diphosphate + H(+). The protein operates within amino-acid biosynthesis; L-histidine biosynthesis; L-histidine from 5-phospho-alpha-D-ribose 1-diphosphate: step 2/9. The sequence is that of Phosphoribosyl-ATP pyrophosphatase (hisE) from Ralstonia nicotianae (strain ATCC BAA-1114 / GMI1000) (Ralstonia solanacearum).